The sequence spans 345 residues: MAMAVAQKFNHLLSSLWHVGQKPPQPEPVFTVDRAQVPPLFWKPYIYAGYRPLHQNWCFYFRTLFQRHNEAVNVWTHLLAALALLLRLIGLAASVDFREDPHALPLFFIVLASFTYLSFSAVAHLLQAKSEFWHYSFFFLDYVGVAVYQFGSALAHFYYAIEPSWHDKVQAIFLPTAAFLAWLSCAGSCYNKYSQKPGLLGRIFQEAPSALAYVLDISPVLHRIIVSPLPAEEDPALLYHKCQVVFFLLAAAFFSTVMPESWFPGSCHIFGQGHQVFHVFLVLCTLAQLEAVTLDYQARRGIYEPLHARWPHNFSGLFLLTVASSSLTALLLSQLVRRKLHQKTK.

Residues 1–74 (MAMAVAQKFN…FQRHNEAVNV (74 aa)) are Cytoplasmic-facing. A helical transmembrane segment spans residues 75–95 (WTHLLAALALLLRLIGLAASV). Residues 96 to 102 (DFREDPH) are Extracellular-facing. The helical transmembrane segment at 103–123 (ALPLFFIVLASFTYLSFSAVA) threads the bilayer. Residues 124 to 136 (HLLQAKSEFWHYS) are Cytoplasmic-facing. Residues 137–157 (FFFLDYVGVAVYQFGSALAHF) form a helical membrane-spanning segment. Residues 158–168 (YYAIEPSWHDK) lie on the Extracellular side of the membrane. Residues 169–189 (VQAIFLPTAAFLAWLSCAGSC) traverse the membrane as a helical segment. Residues 190–243 (YNKYSQKPGLLGRIFQEAPSALAYVLDISPVLHRIIVSPLPAEEDPALLYHKCQ) are Cytoplasmic-facing. Residues 244-264 (VVFFLLAAAFFSTVMPESWFP) form a helical membrane-spanning segment. Topologically, residues 265 to 268 (GSCH) are extracellular. The chain crosses the membrane as a helical span at residues 269–289 (IFGQGHQVFHVFLVLCTLAQL). Residues 290-315 (EAVTLDYQARRGIYEPLHARWPHNFS) lie on the Cytoplasmic side of the membrane. Residues 316–336 (GLFLLTVASSSLTALLLSQLV) traverse the membrane as a helical segment. Over 337–345 (RRKLHQKTK) the chain is Extracellular.

It belongs to the ADIPOR family. As to expression, detected in most adult tissues. Higher expression found in white fat and liver than brown fat and skeletal muscle.

It localises to the cell membrane. Functionally, plasma membrane progesterone (P4) receptor coupled to G proteins. Seems to act through a G(i) mediated pathway. May be involved in oocyte maturation. Involved in neurosteroid inhibition of apoptosis. Also binds dehydroepiandrosterone (DHEA), pregnanolone, pregnenolone and allopregnanolone. In Mus musculus (Mouse), this protein is Membrane progestin receptor alpha.